A 566-amino-acid polypeptide reads, in one-letter code: MVTENPQRLTVLRLATNKGPLAQIWLASNMSNIPRGSVIQTHIAESAKEIAKASGCDDESGDNEYITLRTSGELLQGIVRVYSKQATFLLTDIKDTLTKISMLFKTSQKMTSTVNRLNTVTRVHQLMLEDAVTEREVLVTPGLEFLDDTTIPVGLMAQENSMERKVQGAAPWDTSLEVGRRFSPDEDFEHNNLSSMNLDFDIEEGPITSKSWEEGTRQSSRNFDTHENYIQDDDFPLDDAGTIGWDLGITEKNDQNNDDDDNSVEQGRRLGESIMSEEPTDFGFDLDIEKEAPAGNIDTITDAMTESQPKQTGTRRNSKLLNTKSIQIDEETENSESIASSNTYKEERSNNLLTPQPTNFTTKRLWSEITESMSYLPDPILKNFLSYESLKKRKIHNGREGSIEEPELNVSLNLTDDVISNAGTNDNSFNELTDNMSDFVPIDAGLNEAPFPEENIIDAKTRNEQTTIQTEKVRPTPGEVASKAIVQMAKILRKELSEEKEVIFTDVLKSQANTEPENITKREASRGFFDILSLATEGCIGLSQTEAFGNIKIDAKPALFERFINA.

Ser-161 bears the Phosphoserine mark. The residue at position 175 (Ser-175) is a Phosphoserine; by CDC5. Residue Lys-210 is modified to N6-acetyllysine; by ECO1. Residue Ser-263 is modified to Phosphoserine; by CDC5. Ser-307 carries the phosphoserine modification. Residues 325-356 (SIQIDEETENSESIASSNTYKEERSNNLLTPQ) form a disordered region. Thr-354 carries the post-translational modification Phosphothreonine.

The protein belongs to the rad21 family. In terms of assembly, interacts directly with IRR1/SCC3 in cohesin complex. Cohesin complexes are composed of the SMC1 and SMC3 heterodimer attached via their hinge domain, MCD1/SCC1 which link them, and IRR1, which interacts with MCD1. The cohesin complex also interacts with SCC2, which is required for its association with chromosomes. Post-translationally, cleaved by ESP1 at the onset of anaphase. Phosphorylated by CDC5/Polo-like kinase at the onset of anaphase. Phosphorylation takes places at proximity to cleavage sites and is required for an efficient cleavage by ESP1. In terms of processing, acetylated by ECO1.

The protein resides in the nucleus. It localises to the chromosome. It is found in the centromere. Cleavable component of the cohesin complex involved in chromosome cohesion during cell cycle. The cohesin complex is required for the cohesion of sister chromatids after DNA replication. The cohesin complex apparently forms a large proteinaceous ring within which sister chromatids can be trapped. At metaphase-anaphase transition, this protein is cleaved by ESP1 and dissociates from chromatin, allowing sister chromatids to segregate. This chain is Sister chromatid cohesion protein 1 (MCD1), found in Saccharomyces cerevisiae (strain ATCC 204508 / S288c) (Baker's yeast).